The primary structure comprises 153 residues: Large ribosomal subunit protein uL30 (153 aa).

This sequence belongs to the universal ribosomal protein uL30 family. As to quaternary structure, part of the 50S ribosomal subunit.

This is Large ribosomal subunit protein uL30 from Methanosarcina barkeri (strain Fusaro / DSM 804).